The following is a 443-amino-acid chain: Nitrate/nitrite binding protein NrtA (443 aa).

Residues 1-25 form the signal peptide; it reads MSQFSRRKFLLTAGGTAAAALWLNA. Residue Cys-26 is the site of N-palmitoyl cysteine attachment. Residue Cys-26 is the site of S-diacylglycerol cysteine attachment. The span at 31-46 shows a compositional bias: low complexity; sequence SSTDTTGSTSTPAPSG. A disordered region spans residues 31–52; the sequence is SSTDTTGSTSTPAPSGTSGGDA. Nitrate contacts are provided by Trp-96, Gln-150, His-195, Gly-239, and Lys-268.

This sequence belongs to the CmpA/NrtA family. The complex is composed of two ATP-binding proteins (NrtC and NrtD), two transmembrane proteins (NrtB) and a solute-binding protein (NrtA). NrtA can form homotrimers. The N-terminus is blocked.

The protein localises to the cell inner membrane. Functionally, part of the ABC transporter complex NrtABCD involved in nitrate uptake. The complex is probably also involved in nitrite transport. NrtA is the substrate-binding protein. Binds both nitrate and nitrite with high affinity. This Synechococcus elongatus (strain ATCC 33912 / PCC 7942 / FACHB-805) (Anacystis nidulans R2) protein is Nitrate/nitrite binding protein NrtA.